The following is a 294-amino-acid chain: Large ribosomal subunit protein uL2 (294 aa).

Disordered regions lie at residues 1-37 (MGIR…RPEK) and 228-294 (GSVM…RAAQ). The segment covering 23–37 (ELSRDENGKRPRPEK) has biased composition (basic and acidic residues). The span at 264 to 285 (KTRKRNKPSNKFIVRGRRRGGR) shows a compositional bias: basic residues.

This sequence belongs to the universal ribosomal protein uL2 family. In terms of assembly, part of the 50S ribosomal subunit. Forms a bridge to the 30S subunit in the 70S ribosome.

In terms of biological role, one of the primary rRNA binding proteins. Required for association of the 30S and 50S subunits to form the 70S ribosome, for tRNA binding and peptide bond formation. It has been suggested to have peptidyltransferase activity; this is somewhat controversial. Makes several contacts with the 16S rRNA in the 70S ribosome. The polypeptide is Large ribosomal subunit protein uL2 (Synechococcus sp. (strain JA-2-3B'a(2-13)) (Cyanobacteria bacterium Yellowstone B-Prime)).